Here is a 260-residue protein sequence, read N- to C-terminus: Pyridoxine 5'-phosphate synthase (260 aa).

Position 15 (asparagine 15) interacts with 3-amino-2-oxopropyl phosphate. 17–18 contributes to the 1-deoxy-D-xylulose 5-phosphate binding site; sequence DH. Position 26 (arginine 26) interacts with 3-amino-2-oxopropyl phosphate. Histidine 51 serves as the catalytic Proton acceptor. Positions 53 and 58 each coordinate 1-deoxy-D-xylulose 5-phosphate. The Proton acceptor role is filled by glutamate 78. Threonine 108 provides a ligand contact to 1-deoxy-D-xylulose 5-phosphate. Residue histidine 199 is the Proton donor of the active site. 3-amino-2-oxopropyl phosphate-binding positions include glycine 200 and 221–222; that span reads GH.

It belongs to the PNP synthase family. In terms of assembly, homooctamer; tetramer of dimers.

Its subcellular location is the cytoplasm. It catalyses the reaction 3-amino-2-oxopropyl phosphate + 1-deoxy-D-xylulose 5-phosphate = pyridoxine 5'-phosphate + phosphate + 2 H2O + H(+). The protein operates within cofactor biosynthesis; pyridoxine 5'-phosphate biosynthesis; pyridoxine 5'-phosphate from D-erythrose 4-phosphate: step 5/5. In terms of biological role, catalyzes the complicated ring closure reaction between the two acyclic compounds 1-deoxy-D-xylulose-5-phosphate (DXP) and 3-amino-2-oxopropyl phosphate (1-amino-acetone-3-phosphate or AAP) to form pyridoxine 5'-phosphate (PNP) and inorganic phosphate. The chain is Pyridoxine 5'-phosphate synthase from Cupriavidus taiwanensis (strain DSM 17343 / BCRC 17206 / CCUG 44338 / CIP 107171 / LMG 19424 / R1) (Ralstonia taiwanensis (strain LMG 19424)).